The primary structure comprises 449 residues: Probable glycosyltransferase 5 (449 aa).

Positions 1 to 14 (MMEKHGGKVTSDRR) are enriched in basic and acidic residues. A disordered region spans residues 1 to 24 (MMEKHGGKVTSDRRAGRRQHGQRC). Residues 1–28 (MMEKHGGKVTSDRRAGRRQHGQRCSASD) lie on the Cytoplasmic side of the membrane. Residues 29–49 (AAPLVVVVILIVGALFLILGP) form a helical; Signal-anchor for type II membrane protein membrane-spanning segment. At 50 to 449 (TGSSSFTVPR…HPTFRAARPT (400 aa)) the chain is on the lumenal side. Residues 74–109 (APPPPPPPAQMQAGANASSEEDSGLPPPRQLTDPPY) form a disordered region. 3 N-linked (GlcNAc...) asparagine glycosylation sites follow: asparagine 89, asparagine 413, and asparagine 422.

Belongs to the glycosyltransferase 34 family.

The protein resides in the golgi apparatus membrane. In terms of biological role, probable glycosyltransferase that may be involved in the biosynthesis of xyloglucan. The chain is Probable glycosyltransferase 5 from Oryza sativa subsp. indica (Rice).